The primary structure comprises 509 residues: Steroid 17-alpha-hydroxylase/17,20 lyase (509 aa).

Asn-202 contacts substrate. Cys-442 provides a ligand contact to heme.

Belongs to the cytochrome P450 family. It depends on heme as a cofactor.

The protein resides in the endoplasmic reticulum membrane. Its subcellular location is the microsome membrane. The enzyme catalyses a C21-steroid + reduced [NADPH--hemoprotein reductase] + O2 = a 17alpha-hydroxy-C21-steroid + oxidized [NADPH--hemoprotein reductase] + H2O + H(+). It catalyses the reaction progesterone + reduced [NADPH--hemoprotein reductase] + O2 = 17alpha-hydroxyprogesterone + oxidized [NADPH--hemoprotein reductase] + H2O + H(+). It carries out the reaction pregnenolone + reduced [NADPH--hemoprotein reductase] + O2 = 17alpha-hydroxypregnenolone + oxidized [NADPH--hemoprotein reductase] + H2O + H(+). The catalysed reaction is 17alpha-hydroxyprogesterone + reduced [NADPH--hemoprotein reductase] + O2 = androst-4-ene-3,17-dione + acetate + oxidized [NADPH--hemoprotein reductase] + H2O + 2 H(+). The enzyme catalyses 17alpha-hydroxyprogesterone + reduced [NADPH--hemoprotein reductase] + O2 = 16alpha,17alpha-dihydroxyprogesterone + oxidized [NADPH--hemoprotein reductase] + H2O + H(+). It catalyses the reaction 16alpha,17alpha-dihydroxyprogesterone + reduced [NADPH--hemoprotein reductase] + O2 = 6beta,16alpha,17alpha-trihydroxyprogesterone + oxidized [NADPH--hemoprotein reductase] + H2O + H(+). It carries out the reaction 17alpha-hydroxypregnenolone + reduced [NADPH--hemoprotein reductase] + O2 = 3beta-hydroxyandrost-5-en-17-one + acetate + oxidized [NADPH--hemoprotein reductase] + H2O + 2 H(+). The catalysed reaction is 16alpha,17alpha-dihydroxypregnenolone + reduced [NADPH--hemoprotein reductase] + O2 = 3beta,16alpha-dihydroxy-androst-5-en-17-one + acetate + oxidized [NADPH--hemoprotein reductase] + H2O + 2 H(+). The enzyme catalyses 3beta-hydroxyandrost-5-en-17-one + reduced [NADPH--hemoprotein reductase] + O2 = 3beta,16alpha-dihydroxy-androst-5-en-17-one + oxidized [NADPH--hemoprotein reductase] + H2O + H(+). It catalyses the reaction androst-4-ene-3,17-dione + reduced [NADPH--hemoprotein reductase] + O2 = 16alpha-hydroxyandrost-4-ene-3,17-dione + oxidized [NADPH--hemoprotein reductase] + H2O + H(+). It participates in steroid hormone biosynthesis. The protein operates within steroid biosynthesis; glucocorticoid biosynthesis. Regulated predominantly by intracellular cAMP levels. The 17,20-lyase activity is stimulated by cytochrome b5, which acts as an allosteric effector increasing the Vmax of the lyase activity. Functionally, a cytochrome P450 monooxygenase involved in corticoid and androgen biosynthesis. Catalyzes 17-alpha hydroxylation of C21 steroids, which is common for both pathways. A second oxidative step, required only for androgen synthesis, involves an acyl-carbon cleavage. The 17-alpha hydroxy intermediates, as part of adrenal glucocorticoids biosynthesis pathway, are precursors of cortisol. Hydroxylates steroid hormones, pregnenolone and progesterone to form 17-alpha hydroxy metabolites, followed by the cleavage of the C17-C20 bond to form C19 steroids, dehydroepiandrosterone (DHEA) and androstenedione. Has 16-alpha hydroxylase activity. Catalyzes 16-alpha hydroxylation of 17-alpha hydroxy pregnenolone, followed by the cleavage of the C17-C20 bond to form 16-alpha-hydroxy DHEA. Also 16-alpha hydroxylates androgens, relevant for estriol synthesis. Mechanistically, uses molecular oxygen inserting one oxygen atom into a substrate, and reducing the second into a water molecule, with two electrons provided by NADPH via cytochrome P450 reductase (CPR; NADPH-ferrihemoprotein reductase). The polypeptide is Steroid 17-alpha-hydroxylase/17,20 lyase (CYP17A1) (Ovis aries (Sheep)).